The sequence spans 172 residues: NADH-quinone oxidoreductase subunit B (172 aa).

[4Fe-4S] cluster is bound by residues Cys-46, Cys-47, Cys-111, and Cys-141.

It belongs to the complex I 20 kDa subunit family. NDH-1 is composed of 14 different subunits. Subunits NuoB, C, D, E, F, and G constitute the peripheral sector of the complex. The cofactor is [4Fe-4S] cluster.

The protein resides in the cell membrane. It carries out the reaction a quinone + NADH + 5 H(+)(in) = a quinol + NAD(+) + 4 H(+)(out). Its function is as follows. NDH-1 shuttles electrons from NADH, via FMN and iron-sulfur (Fe-S) centers, to quinones in the respiratory chain. The immediate electron acceptor for the enzyme in this species is believed to be a menaquinone. Couples the redox reaction to proton translocation (for every two electrons transferred, four hydrogen ions are translocated across the cytoplasmic membrane), and thus conserves the redox energy in a proton gradient. This Bacillus anthracis (strain A0248) protein is NADH-quinone oxidoreductase subunit B.